The sequence spans 298 residues: Probable endonuclease 4 (298 aa).

The Zn(2+) site is built by His69, His111, Glu146, Asp180, His183, His215, Asp228, His230, and Glu260.

The protein belongs to the AP endonuclease 2 family. Requires Zn(2+) as cofactor.

The catalysed reaction is Endonucleolytic cleavage to 5'-phosphooligonucleotide end-products.. Functionally, endonuclease IV plays a role in DNA repair. It cleaves phosphodiester bonds at apurinic or apyrimidinic (AP) sites, generating a 3'-hydroxyl group and a 5'-terminal sugar phosphate. The polypeptide is Probable endonuclease 4 (Bacillus cereus (strain AH820)).